Here is a 721-residue protein sequence, read N- to C-terminus: Choline O-acetyltransferase (721 aa).

The Proton acceptor role is filled by H419. Residues 496–508 (GKTFIKSCQVSPD), S534, and Q656 each bind CoA.

This sequence belongs to the carnitine/choline acetyltransferase family. The 54 kDa and 13 kDa chains exist as a heterodimer. The N-terminus of choline O-acetyltransferase 67 kDa and 54 kDa chains are blocked.

The catalysed reaction is choline + acetyl-CoA = acetylcholine + CoA. In terms of biological role, catalyzes the reversible synthesis of acetylcholine (ACh) from acetyl CoA and choline at cholinergic synapses. In Drosophila melanogaster (Fruit fly), this protein is Choline O-acetyltransferase.